A 390-amino-acid polypeptide reads, in one-letter code: Protein PIN-LIKES 3 (390 aa).

Over 1–14 (MVKLLELFITSSKP) the chain is Lumenal. The helical transmembrane segment at 15 to 35 (VVEILLITSVGFYMALDGVNL) threads the bilayer. Topologically, residues 36-43 (LGHDARKY) are cytoplasmic. The helical transmembrane segment at 44–61 (LNNIVFYVFSPSLIGSRL) threads the bilayer. Topologically, residues 62–76 (ADSVTYESLVKMWFM) are lumenal. The chain crosses the membrane as a helical span at residues 77–97 (PVNVLLTFIIGSLLGWIVIVI). At 98 to 107 (TKPPSHLRGL) the chain is on the cytoplasmic side. Residues 108-128 (ILGCCAAGNLGNMPLIIIPAV) traverse the membrane as a helical segment. Residues 129 to 144 (CKEKGGPFGDPESCQK) are Lumenal-facing. A helical transmembrane segment spans residues 145 to 165 (YGMGYVALSMAMGSIYIWTYV). Residues 166–227 (YNLMRVLSNS…SLSQKVNLKT (62 aa)) are Cytoplasmic-facing. A helical membrane pass occupies residues 228 to 248 (IFAPSTIAAMIALVIGLITPL). Residues 249 to 265 (RKLIIGTEAPLRVLQDS) lie on the Lumenal side of the membrane. The chain crosses the membrane as a helical span at residues 266 to 286 (VTLVGDGAVPAMTMIIGGNLL). Residues 287 to 297 (KGLRSSGMKMS) lie on the Cytoplasmic side of the membrane. The chain crosses the membrane as a helical span at residues 298-318 (SIIGVLVARYVLLPMSGVLIV). Topologically, residues 319–331 (RGAYKLDLVTSEP) are lumenal. Residues 332-352 (LYQFVLLLQYAVPPAMNLGTI) form a helical membrane-spanning segment. Residues 353 to 364 (TQLFGTGESECS) lie on the Cytoplasmic side of the membrane. The chain crosses the membrane as a helical span at residues 365 to 385 (VIMLWTYSLASIALTVWPTFF). Residues 386 to 390 (MWLVA) are Lumenal-facing.

This sequence belongs to the auxin efflux carrier (TC 2.A.69.2) family. In terms of tissue distribution, expressed in seedlings, rosette and cauline leaves, flowers and siliques.

The protein localises to the endoplasmic reticulum membrane. Its function is as follows. Involved in cellular auxin homeostasis by regulating auxin metabolism. Regulates intracellular auxin accumulation at the endoplasmic reticulum and thus auxin availability for nuclear auxin signaling. In Arabidopsis thaliana (Mouse-ear cress), this protein is Protein PIN-LIKES 3 (PILS3).